The primary structure comprises 183 residues: Inner membrane-spanning protein YciB (183 aa).

The next 5 membrane-spanning stretches (helical) occupy residues 22-44 (VQAAAITLVLATILQLILVRILF), 53-73 (IVGLSVIIFGILTAYFDDLAF), 76-96 (WKVTIINGLFAAVLLISQYVF), 121-141 (LGWAIFFIICMLINIIISQLF), and 153-173 (GFTGLSLVAVIITGIYLYPYI).

It belongs to the YciB family.

Its subcellular location is the cell inner membrane. In terms of biological role, plays a role in cell envelope biogenesis, maintenance of cell envelope integrity and membrane homeostasis. The polypeptide is Inner membrane-spanning protein YciB (Haemophilus ducreyi (strain 35000HP / ATCC 700724)).